Consider the following 550-residue polypeptide: Dihydroxy-acid dehydratase (550 aa).

Position 78 (Asp78) interacts with Mg(2+). Cys119 contacts [2Fe-2S] cluster. Mg(2+) contacts are provided by Asp120 and Lys121. Lys121 is subject to N6-carboxylysine. Residue Cys192 coordinates [2Fe-2S] cluster. Glu440 contacts Mg(2+). Ser466 (proton acceptor) is an active-site residue.

The protein belongs to the IlvD/Edd family. As to quaternary structure, homodimer. The cofactor is [2Fe-2S] cluster. Mg(2+) is required as a cofactor.

It carries out the reaction (2R)-2,3-dihydroxy-3-methylbutanoate = 3-methyl-2-oxobutanoate + H2O. The enzyme catalyses (2R,3R)-2,3-dihydroxy-3-methylpentanoate = (S)-3-methyl-2-oxopentanoate + H2O. Its pathway is amino-acid biosynthesis; L-isoleucine biosynthesis; L-isoleucine from 2-oxobutanoate: step 3/4. It participates in amino-acid biosynthesis; L-valine biosynthesis; L-valine from pyruvate: step 3/4. Its function is as follows. Functions in the biosynthesis of branched-chain amino acids. Catalyzes the dehydration of (2R,3R)-2,3-dihydroxy-3-methylpentanoate (2,3-dihydroxy-3-methylvalerate) into 2-oxo-3-methylpentanoate (2-oxo-3-methylvalerate) and of (2R)-2,3-dihydroxy-3-methylbutanoate (2,3-dihydroxyisovalerate) into 2-oxo-3-methylbutanoate (2-oxoisovalerate), the penultimate precursor to L-isoleucine and L-valine, respectively. The polypeptide is Dihydroxy-acid dehydratase (Thermodesulfovibrio yellowstonii (strain ATCC 51303 / DSM 11347 / YP87)).